Consider the following 510-residue polypeptide: MIKHALSVTRDGDFAQWYQTVISEADMAEDSGVRGCMVIRPWGYGIWERIQRLLDDRIKATGHENCYFPLFIPLSYFEKEAEHVDGFAKEMAVVTHHRLIQKDGRLVPDPEAKLEEPLVVRPTSETVIGAAMSRWVQSWRDLPVLINQWANVVRWEMRTRMFLRTAEFLWQEGHTAHATVEEAQEETRKMLEVYRDFAETCLAMPVVAGEKPENERFPGAVSTFSIEAMMQDGKALQAGTSHFLGTTFSSAQDIKFQNSEGQFELAQTTSWGVSTRMIGGLIMVHGDDDGLRVPPMVAPWQIVIVPMLRDQPEDAATIDYCKSLQAELAKLTALGEPVRALLDLKAVKAQTKRWGWVKKGAPIVIEVGGRDVAGGNVSVIQRNKLYREDGKLDSRIMPRGDFVAEAAAILESIQQGLYLDARERLDSNIRRDVTDFDGLAAMFADSVKFPGWAEVSWAKPTGAELDAVVERLKALKLTFRNVPGTAAPAEGTCLFTGKPAVERILVARAY.

Belongs to the class-II aminoacyl-tRNA synthetase family. ProS type 3 subfamily. Homodimer.

The protein localises to the cytoplasm. It catalyses the reaction tRNA(Pro) + L-proline + ATP = L-prolyl-tRNA(Pro) + AMP + diphosphate. Functionally, catalyzes the attachment of proline to tRNA(Pro) in a two-step reaction: proline is first activated by ATP to form Pro-AMP and then transferred to the acceptor end of tRNA(Pro). This is Proline--tRNA ligase from Sphingomonas elodea.